The sequence spans 368 residues: Mediator of RNA polymerase II transcription subunit 2 (368 aa).

Positions 112–163 (KKKEQEEEEEKKKKQKEEEEKRKKELEEQERKKKEQEEEEKRRRQQEQDGDK) are enriched in basic and acidic residues. Disordered stretches follow at residues 112-231 (KKKE…DSQS) and 265-308 (SNAN…NNET). Over residues 177–192 (DLDTSQPGTSGQNDIK) the composition is skewed to polar residues. The span at 265 to 290 (SNANATTNSVPNNNNPATNDSNMNND) shows a compositional bias: low complexity.

The protein belongs to the Mediator complex subunit 2 family. As to quaternary structure, component of the Mediator complex.

Its subcellular location is the nucleus. Component of the Mediator complex, a coactivator involved in the regulated transcription of nearly all RNA polymerase II-dependent genes. Mediator functions as a bridge to convey information from gene-specific regulatory proteins to the basal RNA polymerase II transcription machinery. Mediator is recruited to promoters by direct interactions with regulatory proteins and serves as a scaffold for the assembly of a functional preinitiation complex with RNA polymerase II and the general transcription factors. The protein is Mediator of RNA polymerase II transcription subunit 2 (MED2) of Candida glabrata (strain ATCC 2001 / BCRC 20586 / JCM 3761 / NBRC 0622 / NRRL Y-65 / CBS 138) (Yeast).